The primary structure comprises 258 residues: uncharacterized protein (258 aa).

8 residues coordinate NADP(+): Ile-17, Asp-53, Asn-80, Arg-113, Tyr-145, Lys-149, Ile-178, and Ser-180. The active-site Proton donor is Tyr-145. Lys-149 (lowers pKa of active site Tyr) is an active-site residue.

The protein belongs to the short-chain dehydrogenases/reductases (SDR) family.

Its subcellular location is the cytoplasm. The protein localises to the nucleus. This is an uncharacterized protein from Schizosaccharomyces pombe (strain 972 / ATCC 24843) (Fission yeast).